The primary structure comprises 925 residues: Nuclear factor of activated T-cells, cytoplasmic 2 (925 aa).

The tract at residues 1–95 (MNAPERQPQP…FGEPDRVGPQ (95 aa)) is disordered. Phosphoserine is present on S23. The 9aaTAD signature appears at 26 to 34 (DELDFSILF). A phosphoserine mark is found at S99, S107, and S110. The tract at residues 111 to 116 (PRIEIT) is calcineurin-binding. The segment at 119-199 (HELIQAVGPL…CVSPNNGGPD (81 aa)) is transactivation domain A (TAD-A). Residues S148, S168, S171, S172, S174, S175, S177, and S180 each carry the phosphoserine modification. Residues 161–175 (YREPLCLSPASSGSS) are required for cytoplasmic retention of the phosphorylated form. Tandem repeats lie at residues 184 to 200 (SPYT…GPDD) and 213 to 229 (SPRT…LAED). Residues 184 to 286 (SPYTSPCVSP…PQPSSHVAPQ (103 aa)) form a 3 X approximate SP repeats region. Residues 195-297 (NGGPDDLCPQ…HGSPAGYPPV (103 aa)) are disordered. A phosphoserine mark is found at S213, S217, S221, S236, and S243. The segment covering 214 to 224 (PRTSPIMSPRT) has biased composition (polar residues). A Nuclear localization signal motif is present at residues 251–253 (KRR). Phosphoserine is present on residues S255, S268, S274, S276, S280, S326, S330, and S363. Over residues 264–281 (PPGASPQRSRSPSPQPSS) the composition is skewed to low complexity. A 3; approximate repeat occupies 272–286 (SRSPSPQPSSHVAPQ). Residues 392–574 (ASLPPLEWPL…NPIECSQRSA (183 aa)) enclose the RHD domain. Residues 421-428 (RAHYETEG) mediate DNA binding. Residues 664-666 (KRK) carry the Nuclear localization signal motif. 5 positions are modified to phosphoserine: S755, S757, S759, S856, and S859. Residues 839-894 (PGTTRPGPPPVSQGQRLSPGSYPTVIQQQNATSQRAAKNGPPVSDQKEVLPAGVTI) are disordered. Positions 862-874 (TVIQQQNATSQRA) are enriched in polar residues. The short motif at 904-913 (YLDDVNEIIR) is the Nuclear export signal element.

In terms of assembly, member of the multicomponent NFATC transcription complex that consists of at least two components, a pre-existing cytoplasmic component NFATC2 and an inducible nuclear component NFATC1. Other members such as NFATC4, NFATC3 or members of the activating protein-1 family, MAF, GATA4 and Cbp/p300 can also bind the complex. The phosphorylated form specifically interacts with XPO1; which mediates nuclear export. NFATC proteins bind to DNA as monomers. Interacts with NFATC2IP. Interacts with FOXP3. Interacts with TBX21 ('Thr-303' phosphorylated form). Interacts with KAT2A. Interacts with HOMER2 and HOMER3; this interaction competes with calcineurin/PPP3CA-binding and hence prevents NFATC2 dephosphorylation and activation. Interacts with protein phosphatase PPP3CA/calcineurin A. Interacts with AKAP5 (via leucine zipper domain); this is required for NFATC2/NFAT1 recruitment to CRAC channels. In resting cells, phosphorylated by NFATC-kinase on at least 18 sites in the 99-363 region. Upon cell stimulation, all these sites except Ser-243 are dephosphorylated by calcineurin. Dephosphorylation induces a conformational change that simultaneously exposes an NLS and masks an NES, which results in nuclear localization. Simultaneously, Ser-53 or Ser-56 is phosphorylated; which is required for full transcriptional activity. In terms of processing, ubiquitinated in endothelial cells by RNF213 downstream of the non-canonical Wnt signaling pathway, leading to its degradation by the proteasome. Expressed in thymus, spleen, heart, testis, brain, placenta, muscle and pancreas. Isoform 1 is highly expressed in the small intestine, heart, testis, prostate, thymus, placenta and thyroid. Isoform 3 is highly expressed in stomach, uterus, placenta, trachea and thyroid.

The protein localises to the cytoplasm. It is found in the nucleus. Plays a role in the inducible expression of cytokine genes in T-cells, especially in the induction of the IL-2, IL-3, IL-4, TNF-alpha or GM-CSF. Promotes invasive migration through the activation of GPC6 expression and WNT5A signaling pathway. Is involved in the negative regulation of chondrogenesis. Recruited by AKAP5 to ORAI1 pore-forming subunit of CRAC channels in Ca(2+) signaling microdomains where store-operated Ca(2+) influx is coupled to calmodulin and calcineurin signaling and activation of NFAT-dependent transcriptional responses. In Homo sapiens (Human), this protein is Nuclear factor of activated T-cells, cytoplasmic 2 (NFATC2).